The primary structure comprises 250 residues: Small ribosomal subunit protein uS3 (250 aa).

The KH type-2 domain occupies Ile39–Lys111.

This sequence belongs to the universal ribosomal protein uS3 family. Part of the 30S ribosomal subunit. Forms a tight complex with proteins S10 and S14.

Functionally, binds the lower part of the 30S subunit head. Binds mRNA in the 70S ribosome, positioning it for translation. The polypeptide is Small ribosomal subunit protein uS3 (Elm witches'-broom phytoplasma).